The chain runs to 252 residues: Imidazole glycerol phosphate synthase subunit HisF (252 aa).

Catalysis depends on residues Asp-11 and Asp-130.

This sequence belongs to the HisA/HisF family. Heterodimer of HisH and HisF.

It localises to the cytoplasm. The catalysed reaction is 5-[(5-phospho-1-deoxy-D-ribulos-1-ylimino)methylamino]-1-(5-phospho-beta-D-ribosyl)imidazole-4-carboxamide + L-glutamine = D-erythro-1-(imidazol-4-yl)glycerol 3-phosphate + 5-amino-1-(5-phospho-beta-D-ribosyl)imidazole-4-carboxamide + L-glutamate + H(+). Its pathway is amino-acid biosynthesis; L-histidine biosynthesis; L-histidine from 5-phospho-alpha-D-ribose 1-diphosphate: step 5/9. In terms of biological role, IGPS catalyzes the conversion of PRFAR and glutamine to IGP, AICAR and glutamate. The HisF subunit catalyzes the cyclization activity that produces IGP and AICAR from PRFAR using the ammonia provided by the HisH subunit. In Citrifermentans bemidjiense (strain ATCC BAA-1014 / DSM 16622 / JCM 12645 / Bem) (Geobacter bemidjiensis), this protein is Imidazole glycerol phosphate synthase subunit HisF.